The following is an 80-amino-acid chain: Omega-conotoxin-like 1 (80 aa).

An N-terminal signal peptide occupies residues 1-22 (MKLTCVLIVVVLFLTACQLITT). Residues 23–49 (DDSTGKQRYQAWKLRSKMQNSVLSRLS) constitute a propeptide that is removed on maturation. 3 disulfides stabilise this stretch: Cys52–Cys66, Cys59–Cys70, and Cys65–Cys79.

It belongs to the conotoxin O1 superfamily. Post-translationally, peptide predicted to begin at Arg-51, but it seems more probable that it begins at Cys-52, since this position corresponds to a dibasic residue cleavage. As to expression, expressed by the venom duct.

It is found in the secreted. Functionally, omega-conotoxins act at presynaptic membranes, they bind and block voltage-gated calcium channels (Cav). This chain is Omega-conotoxin-like 1, found in Conus capitaneus (Captain cone).